We begin with the raw amino-acid sequence, 805 residues long: Transmembrane channel-like protein 6 (805 aa).

Residues 1–29 (MAQPLAFILDVPETPGDQGQGPSPYDESE) form a disordered region. Residues 1–209 (MAQPLAFILD…SCCGRLRYAC (209 aa)) are Lumenal-facing. Thr-89 is subject to Phosphothreonine. Omega-N-methylarginine is present on Arg-94. Asn-103 carries an N-linked (GlcNAc...) asparagine glycan. A Phosphothreonine modification is found at Thr-105. A helical transmembrane segment spans residues 210–230 (VLALHSLGLALLSALQALMPW). The Cytoplasmic segment spans residues 231-249 (RYALKRIGGQFGSSVLSYF). A helical transmembrane segment spans residues 250–270 (LFLKTLLAFNALLLLLLVAFI). At 271 to 338 (MGPQVAFPPA…TPRVGGLPYN (68 aa)) the chain is on the lumenal side. An N-linked (GlcNAc...) asparagine glycan is attached at Asn-312. A helical membrane pass occupies residues 339–359 (MPLAYLSTVGVSFFITCITLV). The Cytoplasmic segment spans residues 360-431 (YSMAHSFGES…RSVCGRLRQA (72 aa)). Residues 432 to 452 (AVLGLVWLLCLGTALGCAVAV) form a helical membrane-spanning segment. Topologically, residues 453-469 (HVFSEFMIQSPEAAGQE) are lumenal. Residues 470-490 (AVLLVLPLVVGLLNLGAPYLC) form a helical membrane-spanning segment. Over 491–505 (RVLAALEPHDSPVLE) the chain is Cytoplasmic. The helical transmembrane segment at 506 to 526 (VYVAICRNLILKLAILGTLCY) threads the bilayer. Over 527–553 (HWLGRRVGVLQGQCWEDFVGQELYRFL) the chain is Lumenal. The helical transmembrane segment at 554 to 574 (VMDFVLMLLDTLFGELVWRII) threads the bilayer. Over 575 to 604 (SEKKLKRRRKPEFDIARNVLELIYGQTLTW) the chain is Cytoplasmic. The chain crosses the membrane as a helical span at residues 605–625 (LGVLFSPLLPAVQIIKLLLVF). Residues 626–650 (YVKKTSLLANCQAPRRPWLASHMST) lie on the Lumenal side of the membrane. The chain crosses the membrane as a helical span at residues 651–671 (VFLTLLCFPAFLGAAVFLCYA). The Cytoplasmic segment spans residues 672–722 (VWQVKPSSTCGPFRTLDTMYEAGRVWVRHLEAAGPRVSWLPWVHRYLMENT). The helical transmembrane segment at 723–743 (FFVFLVSALLLAVIYLNIQVV) threads the bilayer. Residues 744–805 (RGQRKVICLL…PALLTDEQDA (62 aa)) lie on the Lumenal side of the membrane. The segment at 778-805 (KEREERSRVGTTEEAAAPPALLTDEQDA) is disordered.

The protein belongs to the TMC family. As to quaternary structure, interacts with TMC8. Interacts and forms a complex with TMC8 and CIB1; the interaction stabilizes each component of the complex. Interacts and forms a complex with TMC8 and SLC30A1/ZNT1; the interaction regulates zinc transport into the ER. (Microbial infection) Interacts with human papillomavirus 16/HPV16 protein E5; the interaction alleviates TMC6-mediated transcription factors inhibition. Expressed in placenta, prostate, testis, activated T-lymphocytes and lymphokine-activated killer (LAK) lymphocytes.

Its subcellular location is the endoplasmic reticulum membrane. It localises to the golgi apparatus membrane. The protein localises to the nucleus membrane. In terms of biological role, acts as a regulatory protein involved in the regulation of numerous cellular processes. Together with its homolog TMC8/EVER2, forms a complex with CIB1 in lymphocytes and keratynocytes where TMC6 and TMC8 stabilize CIB1 and reciprocally. Together with TMC8, also forms a complex with and activates zinc transporter ZNT1 at the ER membrane of keratynocytes, thereby facilitating zinc uptake into the ER. Down-regulates the activity of transcription factors induced by zinc and cytokines. Also plays a role in thermal sensation by inhibiting the M-channel (KCNQ2-KCNQ3 channel) current in primary sensory neurons. The chain is Transmembrane channel-like protein 6 from Homo sapiens (Human).